Reading from the N-terminus, the 146-residue chain is Hemoglobin cathodic subunit beta (146 aa).

Positions His2–Phe146 constitute a Globin domain. Heme b contacts are provided by His63 and His92.

The protein belongs to the globin family. As to quaternary structure, heterotetramer of two alpha chains and two beta chains. In terms of tissue distribution, red blood cells.

In terms of biological role, involved in oxygen transport from gills to the various peripheral tissues. The sequence is that of Hemoglobin cathodic subunit beta (hbb) from Hoplosternum littorale (Hassar).